The chain runs to 163 residues: Nucleotide-binding protein DET1318 (163 aa).

This sequence belongs to the YajQ family.

Nucleotide-binding protein. In Dehalococcoides mccartyi (strain ATCC BAA-2266 / KCTC 15142 / 195) (Dehalococcoides ethenogenes (strain 195)), this protein is Nucleotide-binding protein DET1318.